A 132-amino-acid chain; its full sequence is Sirohydrochlorin cobaltochelatase (132 aa).

The Proton acceptor role is filled by histidine 10. Histidine 10 lines the Co(2+) pocket. Substrate-binding positions include arginine 46 and 69-74 (ISYGLH). Position 74 (histidine 74) interacts with Co(2+).

This sequence belongs to the CbiX family. CbiXS subfamily. In terms of assembly, homotetramer; dimer of dimers.

The catalysed reaction is Co-sirohydrochlorin + 2 H(+) = sirohydrochlorin + Co(2+). It functions in the pathway cofactor biosynthesis; adenosylcobalamin biosynthesis; cob(II)yrinate a,c-diamide from sirohydrochlorin (anaerobic route): step 1/10. In terms of biological role, catalyzes the insertion of Co(2+) into sirohydrochlorin as part of the anaerobic pathway to cobalamin biosynthesis. This Archaeoglobus fulgidus (strain ATCC 49558 / DSM 4304 / JCM 9628 / NBRC 100126 / VC-16) protein is Sirohydrochlorin cobaltochelatase.